Consider the following 353-residue polypeptide: Protein RecA (353 aa).

68–75 serves as a coordination point for ATP; sequence GPESSGKT.

The protein belongs to the RecA family.

It localises to the cytoplasm. Functionally, can catalyze the hydrolysis of ATP in the presence of single-stranded DNA, the ATP-dependent uptake of single-stranded DNA by duplex DNA, and the ATP-dependent hybridization of homologous single-stranded DNAs. It interacts with LexA causing its activation and leading to its autocatalytic cleavage. This is Protein RecA from Roseiflexus sp. (strain RS-1).